A 25-amino-acid chain; its full sequence is Grammistin Pp 3 (25 aa).

The protein belongs to the grammistin family. Group 3 subfamily. As to quaternary structure, exists as aggregates of 3-4 molecules. In terms of tissue distribution, expressed by the skin glands.

The protein localises to the secreted. Functionally, thanks to its abundant amphiphilic alpha-helices, it may integrate into membrane phospholipids, leading to lysis of the membrane. Has hemolytic activity. Has antibacterial activity with a broad spectrum against various species of bacteria including both Gram-positive and Gram-negative groups. Also has ichthyotoxic activity. The protein is Grammistin Pp 3 of Pogonoperca punctata (Clown grouper).